Consider the following 448-residue polypeptide: Exodeoxyribonuclease 7 large subunit (448 aa).

This sequence belongs to the XseA family. As to quaternary structure, heterooligomer composed of large and small subunits.

It is found in the cytoplasm. It carries out the reaction Exonucleolytic cleavage in either 5'- to 3'- or 3'- to 5'-direction to yield nucleoside 5'-phosphates.. Functionally, bidirectionally degrades single-stranded DNA into large acid-insoluble oligonucleotides, which are then degraded further into small acid-soluble oligonucleotides. This chain is Exodeoxyribonuclease 7 large subunit, found in Nitrosomonas europaea (strain ATCC 19718 / CIP 103999 / KCTC 2705 / NBRC 14298).